A 61-amino-acid polypeptide reads, in one-letter code: Inner membrane protein p12 (61 aa).

The helical transmembrane segment at 16-36 threads the bilayer; sequence LLIVAIIVVIMAIMLYYFWWM.

It belongs to the asfivirus inner membrane protein p12 family. Homomultimer; disulfide-linked. Post-translationally, not glycosylated.

It localises to the virion membrane. This is Inner membrane protein p12 from Ornithodoros (relapsing fever ticks).